The following is a 75-amino-acid chain: Large ribosomal subunit protein bL31 (75 aa).

It belongs to the bacterial ribosomal protein bL31 family. Type A subfamily. In terms of assembly, part of the 50S ribosomal subunit.

Its function is as follows. Binds the 23S rRNA. This chain is Large ribosomal subunit protein bL31, found in Gluconobacter oxydans (strain 621H) (Gluconobacter suboxydans).